A 274-amino-acid chain; its full sequence is Bis(5'-nucleosyl)-tetraphosphatase, symmetrical (274 aa).

The protein belongs to the Ap4A hydrolase family.

The enzyme catalyses P(1),P(4)-bis(5'-adenosyl) tetraphosphate + H2O = 2 ADP + 2 H(+). Its function is as follows. Hydrolyzes diadenosine 5',5'''-P1,P4-tetraphosphate to yield ADP. The protein is Bis(5'-nucleosyl)-tetraphosphatase, symmetrical of Shewanella putrefaciens (strain CN-32 / ATCC BAA-453).